A 549-amino-acid polypeptide reads, in one-letter code: Undecaprenyl phosphate-alpha-4-amino-4-deoxy-L-arabinose arabinosyl transferase (549 aa).

12 helical membrane passes run 9–29, 80–100, 112–132, 133–153, 176–196, 204–224, 256–276, 288–308, 312–332, 346–366, 376–396, and 402–422; these read LLLIAFGLFYLVPLSNHGLWI, LFGVRIASVVATALSVLLAYL, SLACALLYASFGLIAGQSGYA, NLDPQFTFWVNLSLVALWHAL, FLTKGFLAWLLPVLVALPYML, LLGYGALAVLAALLVCLPWAL, PWWFYLPLLAVSCLPWSGLLP, QAPVVFLALWLLLPLAFFSLS, LPTYIMPCLLPLALLMGHALV, NGLLNLGLALLALAALAYLQL, FELFLVLLVIGAWAAAGLAQW, and AWAAPLLASWVLIALLPAAMP.

The protein belongs to the glycosyltransferase 83 family.

It localises to the cell inner membrane. It carries out the reaction 4-amino-4-deoxy-alpha-L-arabinopyranosyl di-trans,octa-cis-undecaprenyl phosphate + lipid IVA = lipid IIA + di-trans,octa-cis-undecaprenyl phosphate.. It functions in the pathway lipopolysaccharide metabolism; 4-amino-4-deoxy-beta-L-arabinose-lipid A biosynthesis. Its function is as follows. Catalyzes the transfer of the L-Ara4N moiety of the glycolipid undecaprenyl phosphate-alpha-L-Ara4N to lipid A. The modified arabinose is attached to lipid A and is required for resistance to polymyxin and cationic antimicrobial peptides. This Pseudomonas aeruginosa (strain LESB58) protein is Undecaprenyl phosphate-alpha-4-amino-4-deoxy-L-arabinose arabinosyl transferase.